The sequence spans 307 residues: D-alanine--D-alanine ligase (307 aa).

One can recognise an ATP-grasp domain in the interval 101-301; the sequence is KTVMRAAGVS…FGELVRWMVE (201 aa). 127–182 lines the ATP pocket; sequence PLTPPYVVKPIAEGSSMGVIIVRDERSHPPQILASDEWVYGEEVLAETYVAGRELT. Residues Asp-251, Glu-268, and Asn-270 each contribute to the Mg(2+) site.

The protein belongs to the D-alanine--D-alanine ligase family. The cofactor is Mg(2+). Mn(2+) is required as a cofactor.

The protein resides in the cytoplasm. The catalysed reaction is 2 D-alanine + ATP = D-alanyl-D-alanine + ADP + phosphate + H(+). The protein operates within cell wall biogenesis; peptidoglycan biosynthesis. Cell wall formation. The chain is D-alanine--D-alanine ligase from Methylorubrum extorquens (strain CM4 / NCIMB 13688) (Methylobacterium extorquens).